An 88-amino-acid polypeptide reads, in one-letter code: Phosphocarrier protein HPr (88 aa).

The 88-residue stretch at 1 to 88 (MEKKEFHIVA…ETLQKEGLAE (88 aa)) folds into the HPr domain. The active-site Pros-phosphohistidine intermediate is His15. A Phosphoserine; by HPrK/P modification is found at Ser46.

Belongs to the HPr family. In terms of assembly, monomer.

Its subcellular location is the cytoplasm. Phosphorylation on Ser-46 inhibits the phosphoryl transfer from enzyme I to HPr. Its function is as follows. General (non sugar-specific) component of the phosphoenolpyruvate-dependent sugar phosphotransferase system (sugar PTS). This major carbohydrate active-transport system catalyzes the phosphorylation of incoming sugar substrates concomitantly with their translocation across the cell membrane. The phosphoryl group from phosphoenolpyruvate (PEP) is transferred to the phosphoryl carrier protein HPr by enzyme I. Phospho-HPr then transfers it to the PTS EIIA domain. P-Ser-HPr interacts with the catabolite control protein A (CcpA), forming a complex that binds to DNA at the catabolite response elements cre, operator sites preceding a large number of catabolite-regulated genes. Thus, P-Ser-HPr is a corepressor in carbon catabolite repression (CCR), a mechanism that allows bacteria to coordinate and optimize the utilization of available carbon sources. P-Ser-HPr also plays a role in inducer exclusion, in which it probably interacts with several non-PTS permeases and inhibits their transport activity. In Enterococcus faecalis (strain ATCC 700802 / V583), this protein is Phosphocarrier protein HPr (ptsH).